A 308-amino-acid chain; its full sequence is MIISISLMDNIKSKVKHIYEIFFNKRLVETKKISLIEVYGESQNKSIKNPVQNSDSDNSIMLTPLSSKIYHASSPRSKPHVLRGLFEDDEYILSSETDEDNIDPDYQEKMENNGLGFFMEDFICAYGVCPVCGEKSLRKFSHSNVPVIDLVCINKKHHLKKKKCFVFQIKISLNTNYFSLKNQIISVGSKKYGNICHLRKGSDPLLHKIIVPGYICIKLSRSSSTSQEYIIDHKNSFVLIPNYSDESSDLYYQYLDYTSMYGKDLVTWNINMVETKNLDYVLSNNKIIHEIFLEKTIDNPYKDLVKLI.

This is an uncharacterized protein from Acanthamoeba polyphaga (Amoeba).